A 424-amino-acid chain; its full sequence is Serine--tRNA ligase (424 aa).

Position 231–233 (231–233 (TAE)) interacts with L-serine. An ATP-binding site is contributed by 262-264 (RAE). Glutamate 285 is an L-serine binding site. 349 to 352 (EISS) provides a ligand contact to ATP. Serine 385 contacts L-serine.

This sequence belongs to the class-II aminoacyl-tRNA synthetase family. Type-1 seryl-tRNA synthetase subfamily. Homodimer. The tRNA molecule binds across the dimer.

The protein resides in the cytoplasm. The catalysed reaction is tRNA(Ser) + L-serine + ATP = L-seryl-tRNA(Ser) + AMP + diphosphate + H(+). The enzyme catalyses tRNA(Sec) + L-serine + ATP = L-seryl-tRNA(Sec) + AMP + diphosphate + H(+). Its pathway is aminoacyl-tRNA biosynthesis; selenocysteinyl-tRNA(Sec) biosynthesis; L-seryl-tRNA(Sec) from L-serine and tRNA(Sec): step 1/1. Catalyzes the attachment of serine to tRNA(Ser). Is also able to aminoacylate tRNA(Sec) with serine, to form the misacylated tRNA L-seryl-tRNA(Sec), which will be further converted into selenocysteinyl-tRNA(Sec). In Geobacillus kaustophilus (strain HTA426), this protein is Serine--tRNA ligase.